The chain runs to 830 residues: AdoMet-dependent rRNA methyltransferase SPB1 (830 aa).

Residues Gly-58, Trp-60, Asp-78, Asp-94, and Asp-119 each contribute to the S-adenosyl-L-methionine site. Catalysis depends on Lys-159, which acts as the Proton acceptor. Positions 345 to 388 (LTEEEQIEKELQEMQQKQNLKKKREKRKQNEIKQKEITRMQMQM) form a coiled coil. Disordered stretches follow at residues 485–529 (AKEA…SDSD) and 565–642 (EADL…AREV). Composition is skewed to acidic residues over residues 516–529 (VDDD…SDSD), 591–610 (VSEE…DSDF), and 618–630 (DESD…EDEA). The segment covering 631-642 (ERSQKEKHAREV) has biased composition (basic and acidic residues).

Belongs to the class I-like SAM-binding methyltransferase superfamily. RNA methyltransferase RlmE family. SPB1 subfamily. In terms of assembly, component of the nucleolar and nucleoplasmic pre-60S ribosomal particle.

It is found in the nucleus. The protein resides in the nucleolus. It catalyses the reaction a ribonucleotide in rRNA + S-adenosyl-L-methionine = a 2'-O-methylribonucleotide in rRNA + S-adenosyl-L-homocysteine + H(+). Its function is as follows. Required for proper assembly of pre-ribosomal particles during the biogenesis of the 60S ribosomal subunit. The chain is AdoMet-dependent rRNA methyltransferase SPB1 from Eremothecium gossypii (strain ATCC 10895 / CBS 109.51 / FGSC 9923 / NRRL Y-1056) (Yeast).